Consider the following 341-residue polypeptide: Glycerol-3-phosphate dehydrogenase [NAD(P)+] (341 aa).

Residues Ser-13, Trp-14, and Lys-108 each coordinate NADPH. Residues Lys-108, Gly-139, and Ser-141 each contribute to the sn-glycerol 3-phosphate site. Ala-143 contacts NADPH. 5 residues coordinate sn-glycerol 3-phosphate: Lys-194, Asp-247, Ser-257, Arg-258, and Asn-259. Lys-194 functions as the Proton acceptor in the catalytic mechanism. Arg-258 contacts NADPH. NADPH contacts are provided by Val-282 and Glu-284.

Belongs to the NAD-dependent glycerol-3-phosphate dehydrogenase family.

It localises to the cytoplasm. It catalyses the reaction sn-glycerol 3-phosphate + NAD(+) = dihydroxyacetone phosphate + NADH + H(+). The enzyme catalyses sn-glycerol 3-phosphate + NADP(+) = dihydroxyacetone phosphate + NADPH + H(+). The protein operates within membrane lipid metabolism; glycerophospholipid metabolism. Functionally, catalyzes the reduction of the glycolytic intermediate dihydroxyacetone phosphate (DHAP) to sn-glycerol 3-phosphate (G3P), the key precursor for phospholipid synthesis. The polypeptide is Glycerol-3-phosphate dehydrogenase [NAD(P)+] (Lactococcus lactis subsp. lactis (strain IL1403) (Streptococcus lactis)).